A 157-amino-acid chain; its full sequence is Protein Smg homolog (157 aa).

Belongs to the Smg family.

This chain is Protein Smg homolog, found in Aliivibrio salmonicida (strain LFI1238) (Vibrio salmonicida (strain LFI1238)).